Reading from the N-terminus, the 333-residue chain is Methionine import ATP-binding protein MetN 1 (333 aa).

Residues 2–241 (ITFEGVEKVY…PETETAKSFV (240 aa)) form the ABC transporter domain. 38–45 (GFSGAGKS) serves as a coordination point for ATP.

The protein belongs to the ABC transporter superfamily. Methionine importer (TC 3.A.1.24) family. As to quaternary structure, the complex is composed of two ATP-binding proteins (MetN), two transmembrane proteins (MetI) and a solute-binding protein (MetQ).

The protein resides in the cell membrane. It carries out the reaction L-methionine(out) + ATP + H2O = L-methionine(in) + ADP + phosphate + H(+). The enzyme catalyses D-methionine(out) + ATP + H2O = D-methionine(in) + ADP + phosphate + H(+). In terms of biological role, part of the ABC transporter complex MetNIQ involved in methionine import. Responsible for energy coupling to the transport system. The polypeptide is Methionine import ATP-binding protein MetN 1 (Bacillus licheniformis (strain ATCC 14580 / DSM 13 / JCM 2505 / CCUG 7422 / NBRC 12200 / NCIMB 9375 / NCTC 10341 / NRRL NRS-1264 / Gibson 46)).